The primary structure comprises 533 residues: Tyrosine ammonia-lyase (533 aa).

Tyrosine 57 functions as the Proton donor/acceptor in the catalytic mechanism. Histidine 87 contributes to the substrate binding site. The 5-imidazolinone (Ala-Gly) cross-link spans 146–148 (ASG). Position 147 is a 2,3-didehydroalanine (Ser) (serine 147). 2 residues coordinate substrate: asparagine 200 and arginine 305.

The protein belongs to the TAL/TAM family. Homotetramer; dimer of dimers. Post-translationally, contains an active site 4-methylidene-imidazol-5-one (MIO), which is formed autocatalytically by cyclization and dehydration of residues Ala-Ser-Gly.

The catalysed reaction is L-tyrosine = (E)-4-coumarate + NH4(+). It carries out the reaction L-tyrosine = 3-amino-3-(4-hydroxyphenyl)propanoate. Its function is as follows. Has ammonia-lyase and, to a lesser extent, aminomutase activity. Catalyzes the rearrangement of L-tyrosine to R-beta-tyrosine and S-beta-tyrosine. Does not accept L-histidine or L-phenylalanine as substrates. In Cupriavidus metallidurans (strain ATCC 43123 / DSM 2839 / NBRC 102507 / CH34) (Ralstonia metallidurans), this protein is Tyrosine ammonia-lyase.